The sequence spans 235 residues: MKRIFGAKNNKEPPPSIQDASDRINKRGDSVEEKVKRLDAELCKYKDQIKRTRPGPALEAIKARAMRVLKQKKMYEGQRDMLYNQTFNLDQVSFAAEGLKDAQQTMTALKSANKELKGMMKTVKIQDIDNLQDDMMDLMDESSEIQETLGRSYNVPDDIDEDDLLGELDALEADMGNETEADGVPSYLQPDKEPDLNDELNLPSAPMGHTGAPPGRAQAEDEWGLPAVPRASLRG.

A disordered region spans residues 1 to 30; the sequence is MKRIFGAKNNKEPPPSIQDASDRINKRGDS. Residues 20–30 are compositionally biased toward basic and acidic residues; it reads ASDRINKRGDS. A coiled-coil region spans residues 99–148; it reads LKDAQQTMTALKSANKELKGMMKTVKIQDIDNLQDDMMDLMDESSEIQET. Positions 174-235 are disordered; the sequence is DMGNETEADG…PAVPRASLRG (62 aa).

This sequence belongs to the SNF7 family.

Its subcellular location is the endosome. The protein localises to the multivesicular body membrane. In terms of biological role, probable peripherally associated component of the endosomal sorting required for transport complex III (ESCRT-III) which is involved in multivesicular bodies (MVBs) formation and sorting of endosomal cargo proteins into MVBs. The polypeptide is Vacuolar protein sorting-associated protein 60.2 (Arabidopsis thaliana (Mouse-ear cress)).